Here is a 570-residue protein sequence, read N- to C-terminus: Probable metalloreductase AIM14 (570 aa).

7 helical membrane-spanning segments follow: residues 21–41, 70–90, 101–118, 142–162, 177–197, 204–224, and 230–250; these read IKYGYYVLIISLVYLIGLALL, AIHLGILFFAVLIPFYYHYSL, LGRLSYALIPLNLFLTLR, IITVIGLLHGIFFIIKWAIDD, FVGFIISILVLFLLICSIGPM, LFYIVHNLVNVAFILLTPIHS, and FPFLLLNCTLLFIHIINRIVF. Residues 101-219 form the Ferric oxidoreductase domain; it reads LGRLSYALIP…NLVNVAFILL (119 aa). Residues 250–388 enclose the FAD-binding FR-type domain; the sequence is FAKSLMILNK…GGSGISFALP (139 aa). The span at 481–505 shows a compositional bias: polar residues; sequence SNFNSENADSNDNTPETSHSPTKEN. The disordered stretch occupies residues 481 to 507; it reads SNFNSENADSNDNTPETSHSPTKENGS.

It belongs to the ferric reductase (FRE) family. AIM14 subfamily. Interacts with ribosomes.

It is found in the membrane. Probable cell surface metalloreductase. May be involved in iron or copper homeostasis. This is Probable metalloreductase AIM14 (AIM14) from Saccharomyces cerevisiae (strain RM11-1a) (Baker's yeast).